A 732-amino-acid polypeptide reads, in one-letter code: Adducin-related protein 1 (732 aa).

Disordered regions lie at residues 1–22 (MIGR…DPEY) and 684–732 (TRFS…KKDK). Polar residues predominate over residues 685-705 (RFSSTQGTSEGNTTSRSCTTA). Positions 716–732 (KKKKKKGFLSFMRKKDK) are enriched in basic residues.

Belongs to the aldolase class II family. Adducin subfamily.

It localises to the cytoplasm. It is found in the cytoskeleton. The protein resides in the cell membrane. Functionally, membrane-cytoskeleton-associated protein that promotes the assembly of the spectrin-actin network. Plays a role in time-dependent memmory loss and the retention of conditioned behavior over time. This Caenorhabditis elegans protein is Adducin-related protein 1.